Here is a 607-residue protein sequence, read N- to C-terminus: Thymidine kinase (607 aa).

2 disordered regions span residues 1–160 (MAGF…ADST) and 180–215 (DDKS…PSGL). Positions 17 to 32 (KCQEDESPENERHENF) are enriched in basic and acidic residues. Composition is skewed to polar residues over residues 88-106 (AAVT…TSCP), 148-160 (RKTS…ADST), and 194-203 (RRPSSHSALK). An ATP-binding site is contributed by 291–298 (GAPGVGKT). Glu317 functions as the Proton acceptor in the catalytic mechanism. Gln355 provides a ligand contact to substrate. An ATP-binding site is contributed by Arg445. Residue Arg451 participates in substrate binding.

Belongs to the herpesviridae thymidine kinase family. As to quaternary structure, homodimer.

The protein localises to the virion tegument. The protein resides in the host nucleus. The enzyme catalyses thymidine + ATP = dTMP + ADP + H(+). In terms of biological role, catalyzes the transfer of the gamma-phospho group of ATP to thymidine to generate dTMP in the salvage pathway of pyrimidine synthesis. The dTMP serves as a substrate for DNA polymerase during viral DNA replication. Allows the virus to be reactivated and to grow in non-proliferative cells lacking a high concentration of phosphorylated nucleic acid precursors. This chain is Thymidine kinase, found in Epstein-Barr virus (strain GD1) (HHV-4).